The sequence spans 134 residues: Small ribosomal subunit protein uS11 (134 aa).

2 disordered regions span residues 1–22 (MPPK…KNVA) and 114–134 (SIQD…RRRV). Basic residues predominate over residues 9–22 (AAKKVRRKEKKNVA).

This sequence belongs to the universal ribosomal protein uS11 family. In terms of assembly, part of the 30S ribosomal subunit. Interacts with proteins S7 and S18. Binds to IF-3.

Functionally, located on the platform of the 30S subunit, it bridges several disparate RNA helices of the 16S rRNA. Forms part of the Shine-Dalgarno cleft in the 70S ribosome. This chain is Small ribosomal subunit protein uS11, found in Streptomyces avermitilis (strain ATCC 31267 / DSM 46492 / JCM 5070 / NBRC 14893 / NCIMB 12804 / NRRL 8165 / MA-4680).